The primary structure comprises 404 residues: Starvation-sensing protein RspA (404 aa).

Belongs to the mandelate racemase/muconate lactonizing enzyme family.

In terms of biological role, probably involved in the degradation of homoserine lactone (HSL) or of a metabolite of HSL that signals starvation. This chain is Starvation-sensing protein RspA, found in Escherichia coli (strain K12).